A 396-amino-acid polypeptide reads, in one-letter code: Elongation factor Tu (396 aa).

One can recognise a tr-type G domain in the interval 10 to 206 (KPHVNVGTIG…ALDASIPEPK (197 aa)). The segment at 19-26 (GHVDHGKT) is G1. Residue 19-26 (GHVDHGKT) coordinates GTP. T26 contributes to the Mg(2+) binding site. Positions 60 to 64 (GITIS) are G2. The G3 stretch occupies residues 81–84 (DCPG). GTP is bound by residues 81-85 (DCPGH) and 136-139 (NKAD). The G4 stretch occupies residues 136–139 (NKAD). Residues 174–176 (SAL) form a G5 region.

It belongs to the TRAFAC class translation factor GTPase superfamily. Classic translation factor GTPase family. EF-Tu/EF-1A subfamily. In terms of assembly, monomer.

It localises to the cytoplasm. The catalysed reaction is GTP + H2O = GDP + phosphate + H(+). In terms of biological role, GTP hydrolase that promotes the GTP-dependent binding of aminoacyl-tRNA to the A-site of ribosomes during protein biosynthesis. In Dichelobacter nodosus (strain VCS1703A), this protein is Elongation factor Tu.